We begin with the raw amino-acid sequence, 205 residues long: Ribosome maturation factor RimP (205 aa).

This sequence belongs to the RimP family.

Its subcellular location is the cytoplasm. Functionally, required for maturation of 30S ribosomal subunits. The protein is Ribosome maturation factor RimP of Sinorhizobium fredii (strain NBRC 101917 / NGR234).